Consider the following 143-residue polypeptide: Translation initiation factor 2 subunit beta (143 aa).

Belongs to the eIF-2-beta/eIF-5 family. In terms of assembly, heterotrimer composed of an alpha, a beta and a gamma chain.

In terms of biological role, eIF-2 functions in the early steps of protein synthesis by forming a ternary complex with GTP and initiator tRNA. This is Translation initiation factor 2 subunit beta (eif2b) from Methanocaldococcus jannaschii (strain ATCC 43067 / DSM 2661 / JAL-1 / JCM 10045 / NBRC 100440) (Methanococcus jannaschii).